Reading from the N-terminus, the 251-residue chain is Segregation and condensation protein A (251 aa).

It belongs to the ScpA family. As to quaternary structure, component of a cohesin-like complex composed of ScpA, ScpB and the Smc homodimer, in which ScpA and ScpB bind to the head domain of Smc. The presence of the three proteins is required for the association of the complex with DNA.

The protein resides in the cytoplasm. Functionally, participates in chromosomal partition during cell division. May act via the formation of a condensin-like complex containing Smc and ScpB that pull DNA away from mid-cell into both cell halves. This Clostridium botulinum (strain Eklund 17B / Type B) protein is Segregation and condensation protein A.